The chain runs to 250 residues: Golgi SNAP receptor complex member 1 (250 aa).

Alanine 2 carries the post-translational modification N-acetylalanine. Residues 2-229 (AAGTSSYWED…QRINLRKRRD (228 aa)) are Cytoplasmic-facing. A coiled-coil region spans residues 9–30 (WEDLRKQARQLENELDLKLVSF). A disordered region spans residues 38–59 (SHSSTRDGRRDRYSSDTTPLLN). Positions 41–51 (STRDGRRDRYS) are enriched in basic and acidic residues. Residues 68–95 (ETMAIEIEQLLARLTGVNDKMAEYTNSA) are a coiled coil. Position 141 is a phosphoserine (serine 141). Residues 230 to 250 (SLILGGVIGICTILLLLYAFH) form a helical; Anchor for type IV membrane protein membrane-spanning segment.

The protein belongs to the GOSR1 family. As to quaternary structure, component of several multiprotein Golgi SNARE complexes. Identified in a SNARE complex with BET1, STX5 and YKT6, in a SNARE complex with BET1L, STX5 and YKT6, in a SNARE complex with STX5, GOSR2, SEC22B and BET1, and in complex with STX5 and COG3. Interacts with GABARAPL2.

The protein resides in the golgi apparatus membrane. Functionally, involved in transport from the ER to the Golgi apparatus as well as in intra-Golgi transport. It belongs to a super-family of proteins called t-SNAREs or soluble NSF (N-ethylmaleimide-sensitive factor) attachment protein receptor. May play a protective role against hydrogen peroxide induced cytotoxicity under glutathione depleted conditions in neuronal cells by regulating the intracellular ROS levels via inhibition of p38 MAPK (MAPK11, MAPK12, MAPK13 and MAPK14). Participates in docking and fusion stage of ER to cis-Golgi transport. Plays an important physiological role in VLDL-transport vesicle-Golgi fusion and thus in VLDL delivery to the hepatic cis-Golgi. The polypeptide is Golgi SNAP receptor complex member 1 (GOSR1) (Homo sapiens (Human)).